Here is a 560-residue protein sequence, read N- to C-terminus: Eukaryotic translation initiation factor 3 subunit D-1 (560 aa).

Residues 98–166 form a disordered region; the sequence is VQKPPHQRGR…RGPPPKMRES (69 aa). Positions 100–121 are enriched in basic residues; sequence KPPHQRGRFRNMRNSRSGRGRN. Residue T128 is modified to Phosphothreonine. Residues 147–156 show a composition bias toward basic residues; the sequence is GRGMGKKFGH. An RNA gate region spans residues 291–305; it reads EFDLLTVNESSVEPP.

This sequence belongs to the eIF-3 subunit D family. In terms of assembly, component of the eukaryotic translation initiation factor 3 (eIF-3) complex. The eIF-3 complex interacts with pix.

It is found in the cytoplasm. MRNA cap-binding component of the eukaryotic translation initiation factor 3 (eIF-3) complex, which is involved in protein synthesis of a specialized repertoire of mRNAs and, together with other initiation factors, stimulates binding of mRNA and methionyl-tRNAi to the 40S ribosome. The eIF-3 complex specifically targets and initiates translation of a subset of mRNAs involved in cell proliferation. In the eIF-3 complex, eif3d specifically recognizes and binds the 7-methylguanosine cap of a subset of mRNAs. The chain is Eukaryotic translation initiation factor 3 subunit D-1 from Drosophila sechellia (Fruit fly).